The chain runs to 211 residues: tRNA (guanine-N(7)-)-methyltransferase (211 aa).

The S-adenosyl-L-methionine site is built by glutamate 43, aspartate 68, and asparagine 117. Substrate-binding positions include lysine 121, aspartate 153, and 190–193; that span reads TEYE.

The protein belongs to the class I-like SAM-binding methyltransferase superfamily. TrmB family.

It catalyses the reaction guanosine(46) in tRNA + S-adenosyl-L-methionine = N(7)-methylguanosine(46) in tRNA + S-adenosyl-L-homocysteine. Its pathway is tRNA modification; N(7)-methylguanine-tRNA biosynthesis. Its function is as follows. Catalyzes the formation of N(7)-methylguanine at position 46 (m7G46) in tRNA. The polypeptide is tRNA (guanine-N(7)-)-methyltransferase (Clostridium acetobutylicum (strain ATCC 824 / DSM 792 / JCM 1419 / IAM 19013 / LMG 5710 / NBRC 13948 / NRRL B-527 / VKM B-1787 / 2291 / W)).